Reading from the N-terminus, the 240-residue chain is 1-(5-phosphoribosyl)-5-[(5-phosphoribosylamino)methylideneamino] imidazole-4-carboxamide isomerase (240 aa).

Aspartate 9 acts as the Proton acceptor in catalysis. The active-site Proton donor is aspartate 131.

Belongs to the HisA/HisF family.

Its subcellular location is the cytoplasm. The catalysed reaction is 1-(5-phospho-beta-D-ribosyl)-5-[(5-phospho-beta-D-ribosylamino)methylideneamino]imidazole-4-carboxamide = 5-[(5-phospho-1-deoxy-D-ribulos-1-ylimino)methylamino]-1-(5-phospho-beta-D-ribosyl)imidazole-4-carboxamide. It participates in amino-acid biosynthesis; L-histidine biosynthesis; L-histidine from 5-phospho-alpha-D-ribose 1-diphosphate: step 4/9. In Azobacteroides pseudotrichonymphae genomovar. CFP2, this protein is 1-(5-phosphoribosyl)-5-[(5-phosphoribosylamino)methylideneamino] imidazole-4-carboxamide isomerase.